The chain runs to 229 residues: PKHD-type hydroxylase Rpal_3968 (229 aa).

Residues 78–180 (QIFPPLFNRY…RVASFFWLQS (103 aa)) enclose the Fe2OG dioxygenase domain. Positions 98, 100, and 161 each coordinate Fe cation. Residue Arg171 coordinates 2-oxoglutarate.

Requires Fe(2+) as cofactor. L-ascorbate is required as a cofactor.

This is PKHD-type hydroxylase Rpal_3968 from Rhodopseudomonas palustris (strain TIE-1).